The chain runs to 48 residues: uncharacterized protein (48 aa).

Residues 21–43 form a helical membrane-spanning segment; that stretch reads SIFVSLGVFAVSVAILKSRLGNF.

Its subcellular location is the membrane. This is an uncharacterized protein from Schizosaccharomyces pombe (strain 972 / ATCC 24843) (Fission yeast).